A 739-amino-acid chain; its full sequence is Polyphosphate kinase (739 aa).

The segment at 22-45 (WHSDNSALAAPPAATTSASQDQLP) is disordered. The span at 27-40 (SALAAPPAATTSAS) shows a compositional bias: low complexity. Asn-87 provides a ligand contact to ATP. Residues Arg-428 and Arg-458 each contribute to the Mg(2+) site. His-488 serves as the catalytic Phosphohistidine intermediate. 3 residues coordinate ATP: Tyr-521, Arg-621, and His-649. A disordered region spans residues 714 to 739 (QWTASPQKGQQVRDHQESLMERHRSR). The segment covering 724-739 (QVRDHQESLMERHRSR) has biased composition (basic and acidic residues).

The protein belongs to the polyphosphate kinase 1 (PPK1) family. It depends on Mg(2+) as a cofactor. In terms of processing, an intermediate of this reaction is the autophosphorylated ppk in which a phosphate is covalently linked to a histidine residue through a N-P bond.

The enzyme catalyses [phosphate](n) + ATP = [phosphate](n+1) + ADP. Functionally, catalyzes the reversible transfer of the terminal phosphate of ATP to form a long-chain polyphosphate (polyP). The sequence is that of Polyphosphate kinase from Mycobacterium leprae (strain TN).